Consider the following 556-residue polypeptide: 2-succinyl-5-enolpyruvyl-6-hydroxy-3-cyclohexene-1-carboxylate synthase (556 aa).

It belongs to the TPP enzyme family. MenD subfamily. As to quaternary structure, homodimer. Mg(2+) serves as cofactor. The cofactor is Mn(2+). Requires thiamine diphosphate as cofactor.

The enzyme catalyses isochorismate + 2-oxoglutarate + H(+) = 5-enolpyruvoyl-6-hydroxy-2-succinyl-cyclohex-3-ene-1-carboxylate + CO2. It functions in the pathway quinol/quinone metabolism; 1,4-dihydroxy-2-naphthoate biosynthesis; 1,4-dihydroxy-2-naphthoate from chorismate: step 2/7. It participates in quinol/quinone metabolism; menaquinone biosynthesis. In terms of biological role, catalyzes the thiamine diphosphate-dependent decarboxylation of 2-oxoglutarate and the subsequent addition of the resulting succinic semialdehyde-thiamine pyrophosphate anion to isochorismate to yield 2-succinyl-5-enolpyruvyl-6-hydroxy-3-cyclohexene-1-carboxylate (SEPHCHC). The polypeptide is 2-succinyl-5-enolpyruvyl-6-hydroxy-3-cyclohexene-1-carboxylate synthase (Salmonella heidelberg (strain SL476)).